The primary structure comprises 201 residues: Small ribosomal subunit protein uS4c (201 aa).

Residues 15–43 (LGALPGLTSKRPSPGSDLRNQSRSGKRSQ) form a disordered region. Positions 89–150 (MRLDNILFRL…EQRSRALIQK (62 aa)) constitute an S4 RNA-binding domain.

The protein belongs to the universal ribosomal protein uS4 family. As to quaternary structure, part of the 30S ribosomal subunit. Contacts protein S5. The interaction surface between S4 and S5 is involved in control of translational fidelity.

It is found in the plastid. It localises to the chloroplast. In terms of biological role, one of the primary rRNA binding proteins, it binds directly to 16S rRNA where it nucleates assembly of the body of the 30S subunit. Its function is as follows. With S5 and S12 plays an important role in translational accuracy. This chain is Small ribosomal subunit protein uS4c (rps4), found in Ceratophyllum demersum (Rigid hornwort).